The following is a 289-amino-acid chain: RING-H2 finger protein ATL29 (289 aa).

The helical transmembrane segment at 25–45 threads the bilayer; that stretch reads VILTVILLVFFFIGFFTLYFC. The RING-type; atypical zinc-finger motif lies at 110–152; that stretch reads CAICLLEFDGDHVLRLLTTCYHVFHQECIDLWFESHRTCPVCR. A disordered region spans residues 179-237; that stretch reads TSDDEEDDHHRQQTTTQIDTWPSSGQTSSIKKEQNLPEKFSRSHSTGHSIVRNKPEEED. Polar residues predominate over residues 191-207; the sequence is QTTTQIDTWPSSGQTSS. The segment covering 208–219 has biased composition (basic and acidic residues); it reads IKKEQNLPEKFS.

It belongs to the RING-type zinc finger family. ATL subfamily.

The protein localises to the membrane. It catalyses the reaction S-ubiquitinyl-[E2 ubiquitin-conjugating enzyme]-L-cysteine + [acceptor protein]-L-lysine = [E2 ubiquitin-conjugating enzyme]-L-cysteine + N(6)-ubiquitinyl-[acceptor protein]-L-lysine.. The protein operates within protein modification; protein ubiquitination. The chain is RING-H2 finger protein ATL29 (ATL29) from Arabidopsis thaliana (Mouse-ear cress).